Here is a 423-residue protein sequence, read N- to C-terminus: Endochitinase 1 (423 aa).

The N-terminal stretch at 1-22 (MPSLFAQSLAIIATLQATLGLA) is a signal peptide. The GH18 domain maps to 39-401 (YVNAVYFTNW…GTSSNKLGGP (363 aa)). Residues N74, N78, and N96 are each glycosylated (N-linked (GlcNAc...) asparagine). Residues 103-104 (GT) and 130-133 (GGWT) contribute to the chitin site. E172 functions as the Proton donor in the catalytic mechanism. Chitin contacts are provided by residues Y173 and 238-241 (MAYD). An N-linked (GlcNAc...) asparagine glycan is attached at N248. W378 contacts chitin. A disordered region spans residues 380–423 (ASSDRSGSQSLIGTSSNKLGGPDSTENLLNYPDSKYDNMRKQMA). Positions 383 to 407 (DRSGSQSLIGTSSNKLGGPDSTENL) are enriched in polar residues. Over residues 413 to 423 (SKYDNMRKQMA) the composition is skewed to basic and acidic residues.

It belongs to the glycosyl hydrolase 18 family. Chitinase class V subfamily.

The protein localises to the secreted. The catalysed reaction is Random endo-hydrolysis of N-acetyl-beta-D-glucosaminide (1-&gt;4)-beta-linkages in chitin and chitodextrins.. Its function is as follows. Secreted chitinase involved in the degradation of chitin, a component of the cell walls of fungi and exoskeletal elements of some animals (including worms and arthropods). Participates in the infection process and directly acts in the penetration process of the host cuticle. The chain is Endochitinase 1 (chit1) from Metarhizium anisopliae (Entomophthora anisopliae).